The following is a 1183-amino-acid chain: SR-related and CTD-associated factor 4 (1183 aa).

The region spanning 1 to 139 is the CID domain; sequence MDAVNAFNQE…PLLDMAAGTS (139 aa). At K49 the chain carries N6-acetyllysine. S154 bears the Phosphoserine mark. Disordered stretches follow at residues 299 to 324 and 348 to 561; these read VPVP…VQQP and HHQV…QIKS. The segment covering 367-380 has biased composition (pro residues); that stretch reads APPPFPPMPQPGMP. The span at 381 to 398 shows a compositional bias: low complexity; that stretch reads QPGMAQPGLAQPGMAQPT. A compositionally biased stretch (pro residues) spans 399–410; sequence MPQPGMPQPGMP. A compositionally biased stretch (low complexity) spans 411–428; that stretch reads QPGMAQPGLAQPGMAQPG. The span at 429–440 shows a compositional bias: pro residues; the sequence is MPQPAMPQPAMP. Polar residues predominate over residues 457 to 469; sequence PTFQSTFQPQNEP. Over residues 488–498 the composition is skewed to basic and acidic residues; that stretch reads EVKRHVPESRK. The span at 499–536 shows a compositional bias: basic residues; that stretch reads SRSRSPKRRRSRSGSRSRRSRHRRSRSRSRDRRRHSPR. The segment covering 538–553 has biased composition (basic and acidic residues); that stretch reads RSQERRDREKERERRQ. The region spanning 569 to 643 is the RRM domain; the sequence is TTLWVGQLDK…KSIKIAWALN (75 aa). Disordered regions lie at residues 691–722, 800–858, and 920–1183; these read WKGI…IPKP, LPPG…SLPT, and MPPH…EPPR. S717 carries the post-translational modification Phosphoserine. Pro residues-rich tracts occupy residues 800-823 and 920-952; these read LPPG…PPIS and MPPH…PPHG. Low complexity predominate over residues 1006-1020; sequence SPSQQPAPAQQQPPQ. S1042 is modified (phosphoserine). Residues 1047-1122 are compositionally biased toward basic and acidic residues; it reads VENDRERYGS…NRKEKHEVAD (76 aa). Residues 1136 to 1145 show a composition bias toward polar residues; sequence QVGTIDTVSE.

In terms of assembly, interacts with POLR2A; via C-terminal heptapeptide repeat domain (CTD) phosphorylated at 'Ser-2' and 'Ser-5'.

The protein resides in the nucleus. Anti-terminator protein required to prevent early mRNA termination during transcription. Together with SCAF8, acts by suppressing the use of early, alternative poly(A) sites, thereby preventing the accumulation of non-functional truncated proteins. Mechanistically, associates with the phosphorylated C-terminal heptapeptide repeat domain (CTD) of the largest RNA polymerase II subunit (POLR2A), and subsequently binds nascent RNA upstream of early polyadenylation sites to prevent premature mRNA transcript cleavage and polyadenylation. Independently of SCAF8, also acts as a suppressor of transcriptional readthrough. The chain is SR-related and CTD-associated factor 4 from Mus musculus (Mouse).